A 247-amino-acid polypeptide reads, in one-letter code: Mast cell protease 8 (247 aa).

Positions 1–19 (MFLLLVLLVAALPVNAEGG) are cleaved as a signal peptide. Glu20 is a propeptide (activation peptide). The Peptidase S1 domain maps to 21–242 (IIWGTESKPH…FMPWIRKTMK (222 aa)). Asn41 carries N-linked (GlcNAc...) asparagine glycosylation. Cys49 and Cys65 are disulfide-bonded. The active-site Charge relay system is His64. Residues Asn71 and Asn101 are each glycosylated (N-linked (GlcNAc...) asparagine). The Charge relay system role is filled by Asp107. 2 disulfides stabilise this stretch: Cys141–Cys206 and Cys171–Cys185. Asn151 and Asn179 each carry an N-linked (GlcNAc...) asparagine glycan. Ser200 serves as the catalytic Charge relay system.

The protein belongs to the peptidase S1 family. Granzyme subfamily.

The protein localises to the secreted. The protein resides in the cytoplasmic granule. The protein is Mast cell protease 8 (Mcpt8) of Mus musculus (Mouse).